Here is a 400-residue protein sequence, read N- to C-terminus: Snake venom metalloproteinase H3 (400 aa).

The N-terminal stretch at F1–S6 is a signal peptide. Residues S7–T176 constitute a propeptide that is removed on maturation. The 198-residue stretch at K180–P377 folds into the Peptidase M12B domain. Ca(2+)-binding residues include E183 and D267. Cystine bridges form between C291–C372, C331–C356, and C333–C339. H316 provides a ligand contact to Zn(2+). The active site involves E317. The Zn(2+) site is built by H320 and H326. Positions 372, 375, 387, 390, 392, 394, and 400 each coordinate Ca(2+). Residues L378–D400 constitute a propeptide that is removed on maturation.

It belongs to the venom metalloproteinase (M12B) family. P-I subfamily. Monomer. The cofactor is Zn(2+). As to expression, expressed by the venom gland.

Its subcellular location is the secreted. Snake venom metalloproteinase that impairs hemostasis in the envenomed animal. The sequence is that of Snake venom metalloproteinase H3 from Deinagkistrodon acutus (Hundred-pace snake).